The following is a 540-amino-acid chain: Zinc metalloproteinase nas-10 (540 aa).

The Peptidase M12A domain occupies 293-500; that stretch reads ASIFFEQNLI…VEILNKMYCK (208 aa). Intrachain disulfides connect Cys339–Cys499, Cys365–Cys385, Cys504–Cys540, Cys511–Cys533, and Cys520–Cys537. His394 is a binding site for Zn(2+). Glu395 is a catalytic residue. Zn(2+) contacts are provided by His398 and His404. In terms of domain architecture, ShKT spans 504–540; the sequence is CDDKNVYCGAWALQDLCNNPNHNVWMRSNCRKSCNFC.

Zn(2+) is required as a cofactor.

Metalloprotease. This chain is Zinc metalloproteinase nas-10, found in Caenorhabditis elegans.